Consider the following 320-residue polypeptide: ATP-dependent 6-phosphofructokinase (320 aa).

Glycine 12 contacts ATP. Residues 22-26 and 55-60 each bind ADP; these read RGVVR and RYSVSD. ATP is bound by residues 73-74 and 103-106; these read RF and GDGS. Aspartate 104 lines the Mg(2+) pocket. 126 to 128 contributes to the substrate binding site; sequence TID. The Proton acceptor role is filled by aspartate 128. Arginine 155 serves as a coordination point for ADP. Residues arginine 163 and 170 to 172 contribute to the substrate site; that span reads MGR. ADP is bound by residues 186 to 188, lysine 212, and 214 to 216; these read GCE and KKH. Residues glutamate 223, arginine 244, and 250–253 contribute to the substrate site; that span reads HIQR.

It belongs to the phosphofructokinase type A (PFKA) family. ATP-dependent PFK group I subfamily. Prokaryotic clade 'B1' sub-subfamily. In terms of assembly, homotetramer. Mg(2+) serves as cofactor.

Its subcellular location is the cytoplasm. The enzyme catalyses beta-D-fructose 6-phosphate + ATP = beta-D-fructose 1,6-bisphosphate + ADP + H(+). The protein operates within carbohydrate degradation; glycolysis; D-glyceraldehyde 3-phosphate and glycerone phosphate from D-glucose: step 3/4. With respect to regulation, allosterically activated by ADP and other diphosphonucleosides, and allosterically inhibited by phosphoenolpyruvate. Functionally, catalyzes the phosphorylation of D-fructose 6-phosphate to fructose 1,6-bisphosphate by ATP, the first committing step of glycolysis. The sequence is that of ATP-dependent 6-phosphofructokinase from Erwinia tasmaniensis (strain DSM 17950 / CFBP 7177 / CIP 109463 / NCPPB 4357 / Et1/99).